We begin with the raw amino-acid sequence, 155 residues long: SsrA-binding protein (155 aa).

The segment covering 135 to 147 has biased composition (basic and acidic residues); the sequence is TIKRRDQERDIKK. The tract at residues 135–155 is disordered; that stretch reads TIKRRDQERDIKKQMKHYNAR.

This sequence belongs to the SmpB family.

The protein resides in the cytoplasm. Its function is as follows. Required for rescue of stalled ribosomes mediated by trans-translation. Binds to transfer-messenger RNA (tmRNA), required for stable association of tmRNA with ribosomes. tmRNA and SmpB together mimic tRNA shape, replacing the anticodon stem-loop with SmpB. tmRNA is encoded by the ssrA gene; the 2 termini fold to resemble tRNA(Ala) and it encodes a 'tag peptide', a short internal open reading frame. During trans-translation Ala-aminoacylated tmRNA acts like a tRNA, entering the A-site of stalled ribosomes, displacing the stalled mRNA. The ribosome then switches to translate the ORF on the tmRNA; the nascent peptide is terminated with the 'tag peptide' encoded by the tmRNA and targeted for degradation. The ribosome is freed to recommence translation, which seems to be the essential function of trans-translation. The protein is SsrA-binding protein of Streptococcus pyogenes serotype M12 (strain MGAS2096).